The chain runs to 497 residues: Tyrosine-protein kinase SPK-1 (497 aa).

A disordered region spans residues 1–25 (MGQKFSIKCKKQSKNKNTSKCQKIP). The SH3 domain occupies 33–94 (PGSYMVKAKY…PSNYVSKQDG (62 aa)). Positions 100–200 (EAWREIQRWE…NTHIPLTDPM (101 aa)) constitute an SH2 domain. The region spanning 220 to 482 (IEILNEIGRG…LVLQEKMDLL (263 aa)) is the Protein kinase domain. Residues 226–234 (IGRGFFGSV) and lysine 248 each bind ATP. Aspartate 342 functions as the Proton acceptor in the catalytic mechanism.

The protein belongs to the protein kinase superfamily. Tyr protein kinase family.

The catalysed reaction is L-tyrosyl-[protein] + ATP = O-phospho-L-tyrosyl-[protein] + ADP + H(+). The sequence is that of Tyrosine-protein kinase SPK-1 from Girardia tigrina (Planarian).